The following is a 194-amino-acid chain: dCTP deaminase (194 aa).

DCTP-binding positions include 110 to 115 (RSSLAR), D128, 136 to 138 (VLE), Y171, K178, and Q182. Catalysis depends on E138, which acts as the Proton donor/acceptor.

Belongs to the dCTP deaminase family. Homotrimer.

It carries out the reaction dCTP + H2O + H(+) = dUTP + NH4(+). Its pathway is pyrimidine metabolism; dUMP biosynthesis; dUMP from dCTP (dUTP route): step 1/2. Catalyzes the deamination of dCTP to dUTP. This is dCTP deaminase from Mannheimia succiniciproducens (strain KCTC 0769BP / MBEL55E).